The sequence spans 710 residues: Polyribonucleotide nucleotidyltransferase (710 aa).

Asp489 and Asp495 together coordinate Mg(2+). Residues 556 to 615 (PKIDTIKIDVDKIKVVIGKGGETIDKIIAETGVKIDIDDEGNVSIYSSDQAAIDRTKEII) enclose the KH domain. An S1 motif domain is found at 625 to 693 (GEVYHAKVIR…EKGRVDASMK (69 aa)). The tract at residues 691 to 710 (SMKALIPRPPKPEKKEEKHD) is disordered. Residues 700–710 (PKPEKKEEKHD) show a composition bias toward basic and acidic residues.

This sequence belongs to the polyribonucleotide nucleotidyltransferase family. Mg(2+) is required as a cofactor.

The protein resides in the cytoplasm. It carries out the reaction RNA(n+1) + phosphate = RNA(n) + a ribonucleoside 5'-diphosphate. In terms of biological role, involved in mRNA degradation. Catalyzes the phosphorolysis of single-stranded polyribonucleotides processively in the 3'- to 5'-direction. This Streptococcus pyogenes serotype M4 (strain MGAS10750) protein is Polyribonucleotide nucleotidyltransferase.